The primary structure comprises 288 residues: Diaminopimelate epimerase (288 aa).

Substrate contacts are provided by asparagine 14 and asparagine 67. Cysteine 76 (proton donor) is an active-site residue. Residues 77–78 (GN), asparagine 166, asparagine 199, and 217–218 (ER) contribute to the substrate site. Cysteine 226 functions as the Proton acceptor in the catalytic mechanism. 227-228 (GT) contacts substrate.

It belongs to the diaminopimelate epimerase family. In terms of assembly, homodimer.

The protein resides in the cytoplasm. It catalyses the reaction (2S,6S)-2,6-diaminopimelate = meso-2,6-diaminopimelate. The protein operates within amino-acid biosynthesis; L-lysine biosynthesis via DAP pathway; DL-2,6-diaminopimelate from LL-2,6-diaminopimelate: step 1/1. Its function is as follows. Catalyzes the stereoinversion of LL-2,6-diaminopimelate (L,L-DAP) to meso-diaminopimelate (meso-DAP), a precursor of L-lysine and an essential component of the bacterial peptidoglycan. The protein is Diaminopimelate epimerase of Bacillus cereus (strain 03BB102).